The sequence spans 256 residues: MALAKRIIPCLDVDNGRVVKGVKFENIRDAGDPVEIARRYDEQGADEITFLDITASVDGRDTTLHTVERMASQVFIPLTVGGGVRTVQDIRNLLNAGADKVSINTAAVFNPEFVGEAAARFGSQCIVVAIDAKRVSGPGEAPRWEIFTHGGRKPTGLDAVLWAKKMEDLGAGEILLTSMDQDGMKNGFDLGVTRAISDALGIPVIASGGVGNLEHLAAGVIEGHASAVLAASIFHFGEYTVPEAKAYMASRGIVVR.

Active-site residues include aspartate 12 and aspartate 131.

The protein belongs to the HisA/HisF family. In terms of assembly, heterodimer of HisH and HisF.

Its subcellular location is the cytoplasm. It carries out the reaction 5-[(5-phospho-1-deoxy-D-ribulos-1-ylimino)methylamino]-1-(5-phospho-beta-D-ribosyl)imidazole-4-carboxamide + L-glutamine = D-erythro-1-(imidazol-4-yl)glycerol 3-phosphate + 5-amino-1-(5-phospho-beta-D-ribosyl)imidazole-4-carboxamide + L-glutamate + H(+). The protein operates within amino-acid biosynthesis; L-histidine biosynthesis; L-histidine from 5-phospho-alpha-D-ribose 1-diphosphate: step 5/9. IGPS catalyzes the conversion of PRFAR and glutamine to IGP, AICAR and glutamate. The HisF subunit catalyzes the cyclization activity that produces IGP and AICAR from PRFAR using the ammonia provided by the HisH subunit. The chain is Imidazole glycerol phosphate synthase subunit HisF from Pseudomonas syringae pv. tomato (strain ATCC BAA-871 / DC3000).